The primary structure comprises 494 residues: Guanosine-5'-triphosphate,3'-diphosphate pyrophosphatase (494 aa).

It belongs to the GppA/Ppx family. GppA subfamily.

It catalyses the reaction guanosine 3'-diphosphate 5'-triphosphate + H2O = guanosine 3',5'-bis(diphosphate) + phosphate + H(+). Its pathway is purine metabolism; ppGpp biosynthesis; ppGpp from GTP: step 2/2. Its function is as follows. Catalyzes the conversion of pppGpp to ppGpp. Guanosine pentaphosphate (pppGpp) is a cytoplasmic signaling molecule which together with ppGpp controls the 'stringent response', an adaptive process that allows bacteria to respond to amino acid starvation, resulting in the coordinated regulation of numerous cellular activities. The sequence is that of Guanosine-5'-triphosphate,3'-diphosphate pyrophosphatase from Escherichia coli O127:H6 (strain E2348/69 / EPEC).